Consider the following 383-residue polypeptide: uncharacterized protein (383 aa).

This sequence belongs to the peptidase M20 family.

This is an uncharacterized protein from Staphylococcus aureus (strain MRSA252).